The chain runs to 214 residues: ATP phosphoribosyltransferase (214 aa).

The protein belongs to the ATP phosphoribosyltransferase family. Short subfamily. In terms of assembly, heteromultimer composed of HisG and HisZ subunits.

The protein localises to the cytoplasm. It carries out the reaction 1-(5-phospho-beta-D-ribosyl)-ATP + diphosphate = 5-phospho-alpha-D-ribose 1-diphosphate + ATP. It functions in the pathway amino-acid biosynthesis; L-histidine biosynthesis; L-histidine from 5-phospho-alpha-D-ribose 1-diphosphate: step 1/9. In terms of biological role, catalyzes the condensation of ATP and 5-phosphoribose 1-diphosphate to form N'-(5'-phosphoribosyl)-ATP (PR-ATP). Has a crucial role in the pathway because the rate of histidine biosynthesis seems to be controlled primarily by regulation of HisG enzymatic activity. In Methylobacillus flagellatus (strain ATCC 51484 / DSM 6875 / VKM B-1610 / KT), this protein is ATP phosphoribosyltransferase.